A 251-amino-acid chain; its full sequence is Putative mediator of RNA polymerase II transcription subunit 18 (251 aa).

It belongs to the Mediator complex subunit 18 family. As to quaternary structure, component of the Mediator complex.

It is found in the nucleus. Its function is as follows. Component of the Mediator complex, a coactivator involved in the regulated transcription of nearly all RNA polymerase II-dependent genes. Mediator functions as a bridge to convey information from gene-specific regulatory proteins to the basal RNA polymerase II transcription machinery. Mediator is recruited to promoters by direct interactions with regulatory proteins and serves as a scaffold for the assembly of a functional preinitiation complex with RNA polymerase II and the general transcription factors. In Dictyostelium discoideum (Social amoeba), this protein is Putative mediator of RNA polymerase II transcription subunit 18 (med18).